We begin with the raw amino-acid sequence, 598 residues long: Aspartate--tRNA(Asp/Asn) ligase (598 aa).

Residue Glu-177 coordinates L-aspartate. The aspartate stretch occupies residues 201–204 (QLFK). Arg-223 contributes to the L-aspartate binding site. Residues 223–225 (RDE) and Gln-232 each bind ATP. Residue His-456 coordinates L-aspartate. Glu-493 lines the ATP pocket. Arg-500 contributes to the L-aspartate binding site. Position 545-548 (545-548 (GLDR)) interacts with ATP.

It belongs to the class-II aminoacyl-tRNA synthetase family. Type 1 subfamily. Homodimer.

The protein resides in the cytoplasm. It carries out the reaction tRNA(Asx) + L-aspartate + ATP = L-aspartyl-tRNA(Asx) + AMP + diphosphate. In terms of biological role, aspartyl-tRNA synthetase with relaxed tRNA specificity since it is able to aspartylate not only its cognate tRNA(Asp) but also tRNA(Asn). Reaction proceeds in two steps: L-aspartate is first activated by ATP to form Asp-AMP and then transferred to the acceptor end of tRNA(Asp/Asn). This is Aspartate--tRNA(Asp/Asn) ligase from Prochlorococcus marinus (strain MIT 9301).